A 30-amino-acid chain; its full sequence is V-type proton ATPase catalytic subunit A isoform 1 (30 aa).

Belongs to the ATPase alpha/beta chains family. In terms of assembly, V-ATPase is a heteromultimeric enzyme composed of a peripheral catalytic V1 complex (main components: subunits A, B, C, D, E, and F) attached to an integral membrane V0 proton pore complex (main component: the proteolipid protein).

The enzyme catalyses ATP + H2O + 4 H(+)(in) = ADP + phosphate + 5 H(+)(out). Functionally, catalytic subunit of the peripheral V1 complex of vacuolar ATPase. V-ATPase vacuolar ATPase is responsible for acidifying a variety of intracellular compartments in eukaryotic cells. This chain is V-type proton ATPase catalytic subunit A isoform 1, found in Equisetum arvense (Field horsetail).